The chain runs to 35 residues: MESVAYILIFTLCIGTIFFAIAFREPPRFEKPKDK.

Residues 3–23 traverse the membrane as a helical segment; sequence SVAYILIFTLCIGTIFFAIAF.

It belongs to the PsbT family. PSII is composed of 1 copy each of membrane proteins PsbA, PsbB, PsbC, PsbD, PsbE, PsbF, PsbH, PsbI, PsbJ, PsbK, PsbL, PsbM, PsbT, PsbX, PsbY, PsbZ, Psb30/Ycf12, peripheral proteins PsbO, CyanoQ (PsbQ), PsbU, PsbV and a large number of cofactors. It forms dimeric complexes.

It is found in the cellular thylakoid membrane. In terms of biological role, found at the monomer-monomer interface of the photosystem II (PS II) dimer, plays a role in assembly and dimerization of PSII. PSII is a light-driven water plastoquinone oxidoreductase, using light energy to abstract electrons from H(2)O, generating a proton gradient subsequently used for ATP formation. This is Photosystem II reaction center protein T from Nostoc punctiforme (strain ATCC 29133 / PCC 73102).